A 265-amino-acid chain; its full sequence is MAEEGAQKATGKIKSVVLILSGKGGVGKSTVASQIALELANGGNKVGILDVDLCGPSIPRVLGLEDKDVHQCADGWIPVYADKNEKLAVMSIGFLLRNSKDAVVWRGPKKNAMIKQFLSDVVWGDLDYLIIDTPPGTSDEHITVAENVRGLNLTGAVMVTTPQAVALGDVRREITFCKKVGIPIVGIVENMSGYTCPNCSECTNIFSKGGGEALAQLTQVPFLGCLPLDPKLTMSIEDGKSFTELYSESPTALAIREIIRPLITS.

Residue 22-29 (GKGGVGKS) coordinates ATP. Cys196 and Cys199 together coordinate [4Fe-4S] cluster.

It belongs to the Mrp/NBP35 ATP-binding proteins family. NUBP2/CFD1 subfamily. Heterotetramer of 2 NUBP1 and 2 NUBP2 chains. The cofactor is [4Fe-4S] cluster.

It is found in the cytoplasm. In terms of biological role, component of the cytosolic iron-sulfur (Fe/S) protein assembly (CIA) machinery. Required for maturation of extramitochondrial Fe-S proteins. The NUBP1-NUBP2 heterotetramer forms a Fe-S scaffold complex, mediating the de novo assembly of an Fe-S cluster and its transfer to target apoproteins. The protein is Cytosolic Fe-S cluster assembly factor NUBP2 homolog of Trichoplax adhaerens (Trichoplax reptans).